We begin with the raw amino-acid sequence, 63 residues long: MFTLKKSLLLLFFLGTINLSLCEQERDADEEERRDDDEMDVEVEKRFLPLFLPKIICAITKKC.

An N-terminal signal peptide occupies residues 1–22 (MFTLKKSLLLLFFLGTINLSLC). Residues 23-44 (EQERDADEEERRDDDEMDVEVE) constitute a propeptide, removed in mature form. C57 and C63 are oxidised to a cystine.

This sequence belongs to the frog skin active peptide (FSAP) family. Brevinin subfamily. As to expression, expressed by the skin glands.

The protein resides in the secreted. Antimicrobial peptide. Active against some Gram-negative and a variety of Gram-positive bacterial strains. Active against fungus C.glabrata 090902 but not against C.neoformans 201211. Shows hemolytic activity against human erythrocytes. This is Jingdongin-1-MT1 from Amolops mantzorum (Sichuan torrent frog).